The chain runs to 206 residues: MTHSTGTLYIISAPSGAGKSSLVKALTDAKPEIRVSVSHTTRAMRPGEVDGVNYHFVSRETFVKMGEHGDFLERAEVFGNLYGTSQSHLQQTLDAGHDLILEIDWQGAEQVRKLMPQARSIFILPPSLQALHQRLTNRGQDSDEVIDGRMREAVSEMSHYVDYDYLIINDDFAHALGDLKAIFRANQLQQKRQQQRFGKLLAELLG.

The Guanylate kinase-like domain occupies 6–184 (GTLYIISAPS…ALGDLKAIFR (179 aa)). 13–20 (APSGAGKS) provides a ligand contact to ATP.

Belongs to the guanylate kinase family.

It localises to the cytoplasm. The enzyme catalyses GMP + ATP = GDP + ADP. Essential for recycling GMP and indirectly, cGMP. This Pseudomonas fluorescens (strain ATCC BAA-477 / NRRL B-23932 / Pf-5) protein is Guanylate kinase.